We begin with the raw amino-acid sequence, 415 residues long: Lipoyl synthase, mitochondrial (415 aa).

The N-terminal 32 residues, 1-32 (MAASTNRLRFLYSSARTVPQTGSITPISRRTY), are a transit peptide targeting the mitochondrion. Polar residues predominate over residues 22–32 (GSITPISRRTY). Residues 22–53 (GSITPISRRTYATTEPSPSATGAPATARKRTN) are disordered. Positions 33-47 (ATTEPSPSATGAPAT) are enriched in low complexity. [4Fe-4S] cluster is bound by residues Cys132, Cys137, Cys143, Cys163, Cys167, Cys170, and Ser378. Positions 146–367 (GSDKSAATAT…RQRALDMGFL (222 aa)) constitute a Radical SAM core domain. A disordered region spans residues 395-415 (AAGTAGESVTDSKAAVDEATR).

Belongs to the radical SAM superfamily. Lipoyl synthase family. The cofactor is [4Fe-4S] cluster.

It is found in the mitochondrion. It carries out the reaction [[Fe-S] cluster scaffold protein carrying a second [4Fe-4S](2+) cluster] + N(6)-octanoyl-L-lysyl-[protein] + 2 oxidized [2Fe-2S]-[ferredoxin] + 2 S-adenosyl-L-methionine + 4 H(+) = [[Fe-S] cluster scaffold protein] + N(6)-[(R)-dihydrolipoyl]-L-lysyl-[protein] + 4 Fe(3+) + 2 hydrogen sulfide + 2 5'-deoxyadenosine + 2 L-methionine + 2 reduced [2Fe-2S]-[ferredoxin]. It functions in the pathway protein modification; protein lipoylation via endogenous pathway; protein N(6)-(lipoyl)lysine from octanoyl-[acyl-carrier-protein]: step 2/2. Catalyzes the radical-mediated insertion of two sulfur atoms into the C-6 and C-8 positions of the octanoyl moiety bound to the lipoyl domains of lipoate-dependent enzymes, thereby converting the octanoylated domains into lipoylated derivatives. In Aspergillus oryzae (strain ATCC 42149 / RIB 40) (Yellow koji mold), this protein is Lipoyl synthase, mitochondrial.